The sequence spans 295 residues: Cuticle collagen 3A3 (295 aa).

The disordered stretch occupies residues 81–278 (AITSSEENGG…GRPGEPGICP (198 aa)). 2 stretches are compositionally biased toward pro residues: residues 97-109 (PGPP…PGRP) and 146-160 (AGPP…PPGD). 3 triple-helical region regions span residues 98 to 127 (GPPG…PGLP), 147 to 203 (GPPG…VGED), and 212 to 277 (GDQG…PGIC). Low complexity predominate over residues 172-182 (QDGIPGQQGTK). The span at 217-228 (PGEPGPEGPPGE) shows a compositional bias: pro residues. Low complexity predominate over residues 229-244 (PGLQGPVGMPGQVGQK). The span at 261 to 271 (RPGPPGPPGRP) shows a compositional bias: pro residues.

Belongs to the cuticular collagen family.

Its function is as follows. Nematode cuticles are composed largely of collagen-like proteins. The cuticle functions both as an exoskeleton and as a barrier to protect the worm from its environment. The polypeptide is Cuticle collagen 3A3 (3A3) (Haemonchus contortus (Barber pole worm)).